Reading from the N-terminus, the 915-residue chain is Transferrin-binding protein A (915 aa).

The signal sequence occupies residues 1–24 (MQQQHLFRLNILCLSLMTALPAYA). The TonB box motif lies at 38–45 (DTIQVKAK). A TBDR plug domain is found at 51 to 176 (RDNEVTGLGK…LAGSVAFQTK (126 aa)). Residues 187 to 915 (QWGIQSKTAY…NYTFSLEMKF (729 aa)) form the TBDR beta-barrel domain. The segment covering 526–540 (LKTPPQNNGKKTSPN) has biased composition (polar residues). The segment at 526–545 (LKTPPQNNGKKTSPNGREKN) is disordered. Positions 898-915 (NRYAAPGRNYTFSLEMKF) match the TonB C-terminal box motif.

Belongs to the TonB-dependent receptor family. Binds both human apo- and holo-transferrin (TF), via the TF C-terminus. Forms a large complex with TF and TbpB.

The protein resides in the cell outer membrane. Its function is as follows. Neisseria acquires iron by extracting it from serum transferrin (TF) in its human host. Acts as a TF receptor and is required for TF utilization. Binds both apo- and holo-TF, via the TF C-terminus. The protein is Transferrin-binding protein A of Neisseria gonorrhoeae.